We begin with the raw amino-acid sequence, 192 residues long: Thiosulfate reductase electron transfer subunit PhsB (192 aa).

3 consecutive 4Fe-4S ferredoxin-type domains span residues 8–36 (YVML…VPEG), 55–86 (THFQ…RDEN), and 87–116 (GIVQ…LNPQ). [4Fe-4S] cluster-binding residues include Cys-17, Cys-20, Cys-23, Cys-27, Cys-64, Cys-67, Cys-72, Cys-76, Cys-96, Cys-99, Cys-102, Cys-106, Cys-123, Cys-126, Cys-139, and Cys-143.

Composed of three subunits: PhsA, PhsB and PhsC. Requires [4Fe-4S] cluster as cofactor.

The protein localises to the cell inner membrane. In terms of biological role, component of the PhsABC thiosulfate reductase that catalyzes the reduction of thiosulfate to sulfite and hydrogen sulfide, with menaquinol as the sole electron donor. Proton motive force (PMF) is required to drive transmembrane electron transfer within the reductase. The PhsB subunit transfers electrons between PhsC and PhsA. The chain is Thiosulfate reductase electron transfer subunit PhsB (phsB) from Salmonella typhi.